A 334-amino-acid polypeptide reads, in one-letter code: L-lactate dehydrogenase B chain (334 aa).

NAD(+) contacts are provided by residues 30-58 (GQVG…LEDK) and Arg100. Substrate is bound by residues Arg107, Asn139, and Arg170. Asn139 serves as a coordination point for NAD(+). His194 (proton acceptor) is an active-site residue. Thr249 lines the substrate pocket.

The protein belongs to the LDH/MDH superfamily. LDH family. In terms of assembly, homotetramer.

It localises to the cytoplasm. The catalysed reaction is (S)-lactate + NAD(+) = pyruvate + NADH + H(+). It participates in fermentation; pyruvate fermentation to lactate; (S)-lactate from pyruvate: step 1/1. Its function is as follows. Interconverts simultaneously and stereospecifically pyruvate and lactate with concomitant interconversion of NADH and NAD(+). In Squalus acanthias (Spiny dogfish), this protein is L-lactate dehydrogenase B chain (ldhb).